A 180-amino-acid polypeptide reads, in one-letter code: Cytokinin-beta-glucosidase (180 aa).

As to expression, accumulates in young leaves and shoot tips.

Hydrolyzes cytokinin glucosides thus liberating free cytokinins. The sequence is that of Cytokinin-beta-glucosidase (TROLC) from Nicotiana tabacum (Common tobacco).